The sequence spans 90 residues: DNA-binding protein HU-alpha (90 aa).

This sequence belongs to the bacterial histone-like protein family. As to quaternary structure, heterodimer of an alpha and a beta chain.

Functionally, histone-like DNA-binding protein which is capable of wrapping DNA to stabilize it, and thus to prevent its denaturation under extreme environmental conditions. In Vibrio cholerae serotype O1 (strain ATCC 39315 / El Tor Inaba N16961), this protein is DNA-binding protein HU-alpha (hupA).